The chain runs to 151 residues: Metalloproteinase inhibitor 3 (151 aa).

The 108-residue stretch at cysteine 1–cysteine 108 folds into the NTR domain. 3 disulfides stabilise this stretch: cysteine 1/cysteine 108, cysteine 115/cysteine 120, and cysteine 128/cysteine 149. The segment at glutamate 53–serine 54 is involved in metalloproteinase-binding. The segment at glycine 71–arginine 151 is mediates interaction with EFEMP1.

The protein belongs to the protease inhibitor I35 (TIMP) family. In terms of assembly, interacts with EFEMP1.

Its subcellular location is the secreted. It localises to the extracellular space. It is found in the extracellular matrix. Its function is as follows. Complexes with metalloproteinases (such as collagenases) and irreversibly inactivates them by binding to their catalytic zinc cofactor. May form part of a tissue-specific acute response to remodeling stimuli. The chain is Metalloproteinase inhibitor 3 (TIMP3) from Oryctolagus cuniculus (Rabbit).